The sequence spans 244 residues: 1-(5-phosphoribosyl)-5-[(5-phosphoribosylamino)methylideneamino] imidazole-4-carboxamide isomerase (244 aa).

Catalysis depends on Asp-8, which acts as the Proton acceptor. Asp-129 functions as the Proton donor in the catalytic mechanism.

It belongs to the HisA/HisF family.

It is found in the cytoplasm. It catalyses the reaction 1-(5-phospho-beta-D-ribosyl)-5-[(5-phospho-beta-D-ribosylamino)methylideneamino]imidazole-4-carboxamide = 5-[(5-phospho-1-deoxy-D-ribulos-1-ylimino)methylamino]-1-(5-phospho-beta-D-ribosyl)imidazole-4-carboxamide. Its pathway is amino-acid biosynthesis; L-histidine biosynthesis; L-histidine from 5-phospho-alpha-D-ribose 1-diphosphate: step 4/9. This chain is 1-(5-phosphoribosyl)-5-[(5-phosphoribosylamino)methylideneamino] imidazole-4-carboxamide isomerase, found in Chelativorans sp. (strain BNC1).